The chain runs to 525 residues: Protein BSP1 (525 aa).

Disordered stretches follow at residues 21-40 (INKP…TPIE), 98-262 (QQQH…PSKM), 285-325 (LSSE…VPPK), and 339-525 (DKTG…PTKI). Positions 110-122 (IEPVRHIIPDRHS) are enriched in basic and acidic residues. The segment covering 148–162 (NRASSENVVKSTTSA) has biased composition (polar residues). 3 stretches are compositionally biased toward basic and acidic residues: residues 171-182 (YKDDITAKKLDV), 201-223 (DKNK…EDNK), and 230-242 (KDQD…KPTR). Polar residues predominate over residues 251–261 (QLKSPPQSPSK). Residues 285–297 (LSSEENSRSSLSE) are compositionally biased toward low complexity. 2 stretches are compositionally biased toward basic and acidic residues: residues 314–325 (KAEKKKPVVPPK) and 339–354 (DKTG…EPEF). Over residues 382-398 (QNLSKNTENKKSVAQSK) the composition is skewed to polar residues. The span at 447 to 456 (EESEISDSEP) shows a compositional bias: acidic residues. Over residues 510-525 (NKSRSRGPKRKLPTKI) the composition is skewed to basic residues.

It localises to the cell membrane. The protein resides in the cytoplasm. It is found in the cytoskeleton. The protein localises to the actin patch. In terms of biological role, cortical patch protein involved in endocytosis. In Candida glabrata (strain ATCC 2001 / BCRC 20586 / JCM 3761 / NBRC 0622 / NRRL Y-65 / CBS 138) (Yeast), this protein is Protein BSP1 (BSP1).